Reading from the N-terminus, the 63-residue chain is U2-agatoxin-Ao1v (63 aa).

Positions Leu1–Ala14 are cleaved as a signal peptide. The propeptide occupies Val15–Arg28. 3 cysteine pairs are disulfide-bonded: Cys31/Cys47, Cys38/Cys52, and Cys46/Cys62.

Belongs to the neurotoxin 01 (U2-agtx) family. Expressed by the venom gland.

It is found in the secreted. Its function is as follows. Insect active toxin causing rapid but reversible paralysis in crickets. No activity shown in mammals. Does not show effect on mammalian voltage-gated calcium channels. The protein is U2-agatoxin-Ao1v of Agelena orientalis (Funnel-web spider).